A 271-amino-acid chain; its full sequence is Pyrroline-5-carboxylate reductase (271 aa).

Belongs to the pyrroline-5-carboxylate reductase family.

Its subcellular location is the cytoplasm. The enzyme catalyses L-proline + NADP(+) = (S)-1-pyrroline-5-carboxylate + NADPH + 2 H(+). The catalysed reaction is L-proline + NAD(+) = (S)-1-pyrroline-5-carboxylate + NADH + 2 H(+). It participates in amino-acid biosynthesis; L-proline biosynthesis; L-proline from L-glutamate 5-semialdehyde: step 1/1. In terms of biological role, catalyzes the reduction of 1-pyrroline-5-carboxylate (PCA) to L-proline. The protein is Pyrroline-5-carboxylate reductase of Staphylococcus aureus (strain COL).